Reading from the N-terminus, the 358-residue chain is Alanine racemase (358 aa).

The Proton acceptor; specific for D-alanine role is filled by Lys-35. The residue at position 35 (Lys-35) is an N6-(pyridoxal phosphate)lysine. Arg-130 is a substrate binding site. Tyr-255 serves as the catalytic Proton acceptor; specific for L-alanine. Residue Met-303 coordinates substrate.

It belongs to the alanine racemase family. Pyridoxal 5'-phosphate is required as a cofactor.

The catalysed reaction is L-alanine = D-alanine. It participates in amino-acid biosynthesis; D-alanine biosynthesis; D-alanine from L-alanine: step 1/1. Catalyzes the interconversion of L-alanine and D-alanine. May also act on other amino acids. The polypeptide is Alanine racemase (alr) (Shewanella putrefaciens (strain CN-32 / ATCC BAA-453)).